The following is an 86-amino-acid chain: Putative defensin-like protein 244 (86 aa).

The N-terminal stretch at 1-22 (MKGIAMLLVSCLLFSFLSTNLA) is a signal peptide. 4 disulfide bridges follow: C28/C83, C38/C67, C48/C77, and C65/C79.

The protein belongs to the DEFL family.

It is found in the secreted. The chain is Putative defensin-like protein 244 (SCRL11) from Arabidopsis thaliana (Mouse-ear cress).